A 668-amino-acid chain; its full sequence is tRNA 5-methylaminomethyl-2-thiouridine biosynthesis bifunctional protein MnmC (668 aa).

Residues 1–245 form a tRNA (mnm(5)s(2)U34)-methyltransferase region; it reads MKHYSIQPAN…KREMLCGVME (245 aa). The tract at residues 270–668 is FAD-dependent cmnm(5)s(2)U34 oxidoreductase; it reads IGGGIASALL…LLKGKAVKAG (399 aa).

This sequence in the N-terminal section; belongs to the methyltransferase superfamily. tRNA (mnm(5)s(2)U34)-methyltransferase family. It in the C-terminal section; belongs to the DAO family. It depends on FAD as a cofactor.

It localises to the cytoplasm. It carries out the reaction 5-aminomethyl-2-thiouridine(34) in tRNA + S-adenosyl-L-methionine = 5-methylaminomethyl-2-thiouridine(34) in tRNA + S-adenosyl-L-homocysteine + H(+). Catalyzes the last two steps in the biosynthesis of 5-methylaminomethyl-2-thiouridine (mnm(5)s(2)U) at the wobble position (U34) in tRNA. Catalyzes the FAD-dependent demodification of cmnm(5)s(2)U34 to nm(5)s(2)U34, followed by the transfer of a methyl group from S-adenosyl-L-methionine to nm(5)s(2)U34, to form mnm(5)s(2)U34. The sequence is that of tRNA 5-methylaminomethyl-2-thiouridine biosynthesis bifunctional protein MnmC from Escherichia coli O157:H7.